The primary structure comprises 345 residues: NADH-quinone oxidoreductase subunit H (345 aa).

The next 8 helical transmembrane spans lie at Val13–Leu33, Phe84–Phe104, Val115–Gly135, Ile161–Val181, Leu190–Leu210, Tyr248–Ser268, Pro277–Ile297, and Leu309–Ala329.

It belongs to the complex I subunit 1 family. As to quaternary structure, NDH-1 is composed of 14 different subunits. Subunits NuoA, H, J, K, L, M, N constitute the membrane sector of the complex.

Its subcellular location is the cell inner membrane. The enzyme catalyses a quinone + NADH + 5 H(+)(in) = a quinol + NAD(+) + 4 H(+)(out). In terms of biological role, NDH-1 shuttles electrons from NADH, via FMN and iron-sulfur (Fe-S) centers, to quinones in the respiratory chain. The immediate electron acceptor for the enzyme in this species is believed to be ubiquinone. Couples the redox reaction to proton translocation (for every two electrons transferred, four hydrogen ions are translocated across the cytoplasmic membrane), and thus conserves the redox energy in a proton gradient. This subunit may bind ubiquinone. This chain is NADH-quinone oxidoreductase subunit H, found in Ruegeria sp. (strain TM1040) (Silicibacter sp.).